Reading from the N-terminus, the 321-residue chain is Glucokinase (321 aa).

Gly-8–Thr-13 provides a ligand contact to ATP.

It belongs to the bacterial glucokinase family.

The protein localises to the cytoplasm. The enzyme catalyses D-glucose + ATP = D-glucose 6-phosphate + ADP + H(+). The polypeptide is Glucokinase (Citrobacter koseri (strain ATCC BAA-895 / CDC 4225-83 / SGSC4696)).